We begin with the raw amino-acid sequence, 369 residues long: tRNA/tmRNA (uracil-C(5))-methyltransferase (369 aa).

Residues glutamine 193, tyrosine 221, asparagine 226, glutamate 242, and aspartate 302 each contribute to the S-adenosyl-L-methionine site. Cysteine 327 acts as the Nucleophile in catalysis. The active-site Proton acceptor is the glutamate 361.

Belongs to the class I-like SAM-binding methyltransferase superfamily. RNA M5U methyltransferase family. TrmA subfamily.

The catalysed reaction is uridine(54) in tRNA + S-adenosyl-L-methionine = 5-methyluridine(54) in tRNA + S-adenosyl-L-homocysteine + H(+). It carries out the reaction uridine(341) in tmRNA + S-adenosyl-L-methionine = 5-methyluridine(341) in tmRNA + S-adenosyl-L-homocysteine + H(+). Functionally, dual-specificity methyltransferase that catalyzes the formation of 5-methyluridine at position 54 (m5U54) in all tRNAs, and that of position 341 (m5U341) in tmRNA (transfer-mRNA). The sequence is that of tRNA/tmRNA (uracil-C(5))-methyltransferase from Sulfurimonas denitrificans (strain ATCC 33889 / DSM 1251) (Thiomicrospira denitrificans (strain ATCC 33889 / DSM 1251)).